Reading from the N-terminus, the 201-residue chain is uncharacterized protein (201 aa).

Belongs to the methyltransferase superfamily.

This is an uncharacterized protein from Bacillus subtilis (strain 168).